Consider the following 705-residue polypeptide: Gamma-adducin (705 aa).

Polar residues predominate over residues 1–10; it reads MSSDTSQAVI. The interval 1-22 is disordered; that stretch reads MSSDTSQAVITTPPPPSMPHKE. Serine 2 is modified (N-acetylserine). Serine 31, serine 42, serine 64, serine 402, serine 414, serine 423, serine 442, and serine 461 each carry phosphoserine. Disordered regions lie at residues 472–495, 535–556, 572–612, and 658–705; these read EDPS…VPLN, PSTM…PFSH, KQQG…EENH, and EITI…KVEA. Lysine 484 participates in a covalent cross-link: Glycyl lysine isopeptide (Lys-Gly) (interchain with G-Cter in SUMO2). 7 positions are modified to phosphoserine: serine 583, serine 585, serine 590, serine 672, serine 676, serine 678, and serine 680. Over residues 590-605 the composition is skewed to low complexity; that stretch reads SVSQIQSQTQSPQSVP. Residues 681–705 show a composition bias toward basic residues; it reads PSKKKKKFRTPSFLKKNKKKEKVEA. Phosphoserine; by PKC is present on serine 682. The tract at residues 683 to 700 is interaction with calmodulin; it reads KKKKKFRTPSFLKKNKKK.

It belongs to the aldolase class II family. Adducin subfamily. Heterodimer of an alpha and a gamma subunit. In terms of processing, sumoylated. Proteolytically cleaved by asparagine endopeptidase (AEP) into 2 fragments. Overexpression of the 1-357 fragment induces neuronal apoptosis, and overexpression of either 1-357 or 358-706 fragment increases the degeneration of dendritic spines. Overexpression of the 1-357 fragment impairs neurite outgrowth by downregulating the expression of Rac2, and induces synaptic dysfunction and cognitive impairments in tau P301S transgenic mice, a mouse model for Alzheimer disease (AD). Expressed in kidney, brain, spleen, liver and heart. In terms of tissue distribution, expressed in renal interlobular arteries, afferent/efferent arterioles, parietal glomerular epithelial cells and microvilli of the luminal surface of the proximal tubule (at protein level). Expressed in podocytes (at protein level) Expressed in renal cortex (at protein level). Expressed in primary vascular smooth muscle cells (VSMCs) of the kidney (at protein level). Expressed in tubular cells and glomeruli (at protein level).

The protein localises to the cytoplasm. The protein resides in the cytoskeleton. Its subcellular location is the cell membrane. Its function is as follows. Membrane-cytoskeleton-associated protein that promotes the assembly of the spectrin-actin network. Plays a role in actin filament capping. Binds to calmodulin. Involved in myogenic reactivity of the renal afferent arteriole (Af-art), renal interlobular arteries and middle cerebral artery (MCA) to increased perfusion pressure. Involved in regulation of potassium channels in the vascular smooth muscle cells (VSMCs) of the Af-art and MCA ex vivo. Involved in regulation of glomerular capillary pressure, glomerular filtration rate (GFR) and glomerular nephrin expression in response to hypertension. Involved in renal blood flow (RBF) autoregulation. Plays a role in podocyte structure and function. Regulates globular monomer actin (G-actin) and filamentous polymer actin (F-actin) ratios in the primary podocytes affecting actin cytoskeleton organization. Regulates expression of synaptopodin, RhoA, Rac1 and CDC42 in the renal cortex and the primary podocytes. Regulates expression of nephrin in the glomeruli and in the primary podocytes, expression of nephrin and podocinin in the renal cortex, and expression of focal adhesion proteins integrin alpha-3 and integrin beta-1 in the glomeruli. Involved in cell migration and cell adhesion of podocytes, and in podocyte foot process effacement. Regulates expression of profibrotics markers MMP2, MMP9, TGF beta-1, tubular tight junction protein E-cadherin, and mesenchymal markers vimentin and alpha-SMA. Promotes the growth of neurites. The protein is Gamma-adducin (Add3) of Rattus norvegicus (Rat).